A 241-amino-acid chain; its full sequence is Pyridoxine 5'-phosphate synthase (241 aa).

3-amino-2-oxopropyl phosphate is bound at residue Asn7. Residue 9–10 (DH) participates in 1-deoxy-D-xylulose 5-phosphate binding. Arg18 contacts 3-amino-2-oxopropyl phosphate. His43 (proton acceptor) is an active-site residue. Positions 45 and 50 each coordinate 1-deoxy-D-xylulose 5-phosphate. Glu70 functions as the Proton acceptor in the catalytic mechanism. Residue Thr100 participates in 1-deoxy-D-xylulose 5-phosphate binding. The Proton donor role is filled by His191. Residues Gly192 and 213–214 (GH) contribute to the 3-amino-2-oxopropyl phosphate site.

The protein belongs to the PNP synthase family. Homooctamer; tetramer of dimers.

Its subcellular location is the cytoplasm. It catalyses the reaction 3-amino-2-oxopropyl phosphate + 1-deoxy-D-xylulose 5-phosphate = pyridoxine 5'-phosphate + phosphate + 2 H2O + H(+). It participates in cofactor biosynthesis; pyridoxine 5'-phosphate biosynthesis; pyridoxine 5'-phosphate from D-erythrose 4-phosphate: step 5/5. Catalyzes the complicated ring closure reaction between the two acyclic compounds 1-deoxy-D-xylulose-5-phosphate (DXP) and 3-amino-2-oxopropyl phosphate (1-amino-acetone-3-phosphate or AAP) to form pyridoxine 5'-phosphate (PNP) and inorganic phosphate. The protein is Pyridoxine 5'-phosphate synthase of Nitrosospira multiformis (strain ATCC 25196 / NCIMB 11849 / C 71).